We begin with the raw amino-acid sequence, 525 residues long: GMP synthase [glutamine-hydrolyzing] (525 aa).

The Glutamine amidotransferase type-1 domain occupies 9–202 (SILIIDFGSQ…VHKIVGLKSD (194 aa)). The active-site Nucleophile is the C86. Catalysis depends on residues H176 and E178. The GMPS ATP-PPase domain occupies 203–400 (WTMAAYRAEM…LGLPESFIGR (198 aa)). 230–236 (SGGVDSS) lines the ATP pocket.

As to quaternary structure, homodimer.

The enzyme catalyses XMP + L-glutamine + ATP + H2O = GMP + L-glutamate + AMP + diphosphate + 2 H(+). The protein operates within purine metabolism; GMP biosynthesis; GMP from XMP (L-Gln route): step 1/1. In terms of biological role, catalyzes the synthesis of GMP from XMP. The protein is GMP synthase [glutamine-hydrolyzing] of Agrobacterium fabrum (strain C58 / ATCC 33970) (Agrobacterium tumefaciens (strain C58)).